Consider the following 340-residue polypeptide: tRNA dimethylallyltransferase (340 aa).

The interval 1–25 (MDQNRSPNGRDCREPPSPSSTARPG) is disordered. 31-38 (GPTATGKS) contributes to the ATP binding site. Residue 33-38 (TATGKS) coordinates substrate. Residues 56 to 59 (DSRQ) are interaction with substrate tRNA.

Belongs to the IPP transferase family. In terms of assembly, monomer. The cofactor is Mg(2+).

The enzyme catalyses adenosine(37) in tRNA + dimethylallyl diphosphate = N(6)-dimethylallyladenosine(37) in tRNA + diphosphate. In terms of biological role, catalyzes the transfer of a dimethylallyl group onto the adenine at position 37 in tRNAs that read codons beginning with uridine, leading to the formation of N6-(dimethylallyl)adenosine (i(6)A). The sequence is that of tRNA dimethylallyltransferase from Synechococcus sp. (strain JA-3-3Ab) (Cyanobacteria bacterium Yellowstone A-Prime).